Consider the following 334-residue polypeptide: Galactinol synthase 4 (334 aa).

Lys104 is a catalytic residue. The Mn(2+) site is built by Asp120, Asp122, and His258.

It belongs to the glycosyltransferase 8 family. Galactosyltransferase subfamily. The cofactor is a divalent metal cation.

It is found in the cytoplasm. It carries out the reaction myo-inositol + UDP-alpha-D-galactose = alpha-D-galactosyl-(1-&gt;3)-1D-myo-inositol + UDP + H(+). Its function is as follows. Galactinol synthase involved in the biosynthesis of raffinose family oligosaccharides (RFOs) that function as osmoprotectants. May promote plant stress tolerance. The sequence is that of Galactinol synthase 4 (GOLS4) from Arabidopsis thaliana (Mouse-ear cress).